A 253-amino-acid chain; its full sequence is Aspartate/glutamate leucyltransferase (253 aa).

This sequence belongs to the R-transferase family. Bpt subfamily.

The protein localises to the cytoplasm. It catalyses the reaction N-terminal L-glutamyl-[protein] + L-leucyl-tRNA(Leu) = N-terminal L-leucyl-L-glutamyl-[protein] + tRNA(Leu) + H(+). The enzyme catalyses N-terminal L-aspartyl-[protein] + L-leucyl-tRNA(Leu) = N-terminal L-leucyl-L-aspartyl-[protein] + tRNA(Leu) + H(+). Functionally, functions in the N-end rule pathway of protein degradation where it conjugates Leu from its aminoacyl-tRNA to the N-termini of proteins containing an N-terminal aspartate or glutamate. In Allorhizobium ampelinum (strain ATCC BAA-846 / DSM 112012 / S4) (Agrobacterium vitis (strain S4)), this protein is Aspartate/glutamate leucyltransferase.